The sequence spans 119 residues: uncharacterized protein (119 aa).

It to T.pallidum TP_0127, TP_0315 and TP_0619.

This is an uncharacterized protein from Treponema pallidum (strain Nichols).